A 126-amino-acid chain; its full sequence is Histone H2B type 1-H (126 aa).

Over residues 1–12 the composition is skewed to low complexity; sequence MPEPAKSAPAPK. Residues 1-36 form a disordered region; it reads MPEPAKSAPAPKKGSKKALTKAQKKDGKKRKRSRKE. Proline 2 is subject to N-acetylproline. An ADP-ribosyl glutamic acid modification is found at glutamate 3. N6-(2-hydroxyisobutyryl)lysine; alternate is present on lysine 6. Lysine 6 is modified (N6-(beta-hydroxybutyryl)lysine; alternate). At lysine 6 the chain carries N6-acetyllysine; alternate. Residue lysine 6 is modified to N6-butyryllysine; alternate. An N6-crotonyllysine; alternate modification is found at lysine 6. At lysine 6 the chain carries N6-lactoyllysine; alternate. Lysine 6 participates in a covalent cross-link: Glycyl lysine isopeptide (Lys-Gly) (interchain with G-Cter in SUMO2); alternate. Position 7 is an ADP-ribosylserine (serine 7). Lysine 12 bears the N6-(beta-hydroxybutyryl)lysine; alternate mark. N6-acetyllysine; alternate occurs at positions 12 and 13. An N6-crotonyllysine; alternate mark is found at lysine 12 and lysine 13. Lysine 12 carries the post-translational modification N6-lactoyllysine; alternate. An N6-(2-hydroxyisobutyryl)lysine; alternate modification is found at lysine 13. Serine 15 bears the Phosphoserine; by STK4/MST1 mark. 4 positions are modified to N6-acetyllysine; alternate: lysine 16, lysine 17, lysine 21, and lysine 24. Lysine 16, lysine 17, lysine 21, and lysine 24 each carry N6-crotonyllysine; alternate. N6-lactoyllysine; alternate occurs at positions 16, 17, 21, and 24. Lysine 17 carries the N6-glutaryllysine; alternate modification. Lysine 21 and lysine 24 each carry N6-(2-hydroxyisobutyryl)lysine; alternate. Lysine 21 is modified (N6-(beta-hydroxybutyryl)lysine; alternate). Lysine 21 is subject to N6-butyryllysine; alternate. Lysine 21 participates in a covalent cross-link: Glycyl lysine isopeptide (Lys-Gly) (interchain with G-Cter in SUMO2); alternate. Lysine 25 is modified (N6-(2-hydroxyisobutyryl)lysine). The residue at position 35 (lysine 35) is an N6-(2-hydroxyisobutyryl)lysine; alternate. Lysine 35 is modified (N6-(beta-hydroxybutyryl)lysine; alternate). Lysine 35 is subject to N6-crotonyllysine; alternate. An N6-glutaryllysine; alternate modification is found at lysine 35. At lysine 35 the chain carries N6-succinyllysine; alternate. Lysine 35 is covalently cross-linked (Glycyl lysine isopeptide (Lys-Gly) (interchain with G-Cter in ubiquitin); alternate). Glutamate 36 is modified (polyADP-ribosyl glutamic acid). A Phosphoserine; by AMPK modification is found at serine 37. Lysine 44, lysine 47, and lysine 58 each carry N6-(2-hydroxyisobutyryl)lysine; alternate. Lysine 44 bears the N6-lactoyllysine; alternate mark. N6-glutaryllysine; alternate is present on residues lysine 44 and lysine 47. Lysine 47 carries the N6-methyllysine; alternate modification. Lysine 58 is modified (N6,N6-dimethyllysine; alternate). At arginine 80 the chain carries Dimethylated arginine. Lysine 86 carries the N6-(2-hydroxyisobutyryl)lysine; alternate modification. Position 86 is an N6-acetyllysine; alternate (lysine 86). Lysine 86 is modified (N6-lactoyllysine; alternate). Lysine 86 is subject to N6,N6,N6-trimethyllysine; alternate. An omega-N-methylarginine mark is found at arginine 87 and arginine 93. N6-(2-hydroxyisobutyryl)lysine; alternate is present on lysine 109. Lysine 109 is subject to N6-(beta-hydroxybutyryl)lysine; alternate. At lysine 109 the chain carries N6-lactoyllysine; alternate. Lysine 109 carries the N6-glutaryllysine; alternate modification. The residue at position 109 (lysine 109) is an N6-methyllysine; alternate. The O-linked (GlcNAc) serine glycan is linked to serine 113. Threonine 116 carries the post-translational modification Phosphothreonine. Lysine 117 and lysine 121 each carry N6-(2-hydroxyisobutyryl)lysine; alternate. Lysine 117 carries the N6-(beta-hydroxybutyryl)lysine; alternate modification. Lysine 117 and lysine 121 each carry N6-lactoyllysine; alternate. N6-glutaryllysine; alternate is present on residues lysine 117 and lysine 121. 2 positions are modified to N6-succinyllysine; alternate: lysine 117 and lysine 121. N6-methylated lysine; alternate is present on lysine 117. A Glycyl lysine isopeptide (Lys-Gly) (interchain with G-Cter in ubiquitin); alternate cross-link involves residue lysine 121.

This sequence belongs to the histone H2B family. In terms of assembly, the nucleosome is a histone octamer containing two molecules each of H2A, H2B, H3 and H4 assembled in one H3-H4 heterotetramer and two H2A-H2B heterodimers. The octamer wraps approximately 147 bp of DNA. Monoubiquitination at Lys-35 (H2BK34Ub) by the MSL1/MSL2 dimer is required for histone H3 'Lys-4' (H3K4me) and 'Lys-79' (H3K79me) methylation and transcription activation at specific gene loci, such as HOXA9 and MEIS1 loci. Similarly, monoubiquitination at Lys-121 (H2BK120Ub) by the RNF20/40 complex gives a specific tag for epigenetic transcriptional activation and is also prerequisite for histone H3 'Lys-4' and 'Lys-79' methylation. It also functions cooperatively with the FACT dimer to stimulate elongation by RNA polymerase II. H2BK120Ub also acts as a regulator of mRNA splicing: deubiquitination by USP49 is required for efficient cotranscriptional splicing of a large set of exons. In terms of processing, phosphorylated on Ser-15 (H2BS14ph) by STK4/MST1 during apoptosis; which facilitates apoptotic chromatin condensation. Also phosphorylated on Ser-15 in response to DNA double strand breaks (DSBs), and in correlation with somatic hypermutation and immunoglobulin class-switch recombination. Phosphorylation at Ser-37 (H2BS36ph) by AMPK in response to stress promotes transcription. Post-translationally, glcNAcylation at Ser-113 promotes monoubiquitination of Lys-121. It fluctuates in response to extracellular glucose, and associates with transcribed genes. ADP-ribosylated by PARP1 or PARP2 on Ser-7 (H2BS6ADPr) in response to DNA damage. H2BS6ADPr promotes recruitment of CHD1L. Mono-ADP-ribosylated on Glu-3 (H2BE2ADPr) by PARP3 in response to single-strand breaks. Poly ADP-ribosylation on Glu-36 (H2BE35ADPr) by PARP1 regulates adipogenesis: it inhibits phosphorylation at Ser-37 (H2BS36ph), thereby blocking expression of pro-adipogenetic genes. In terms of processing, crotonylation (Kcr) is specifically present in male germ cells and marks testis-specific genes in post-meiotic cells, including X-linked genes that escape sex chromosome inactivation in haploid cells. Crotonylation marks active promoters and enhancers and confers resistance to transcriptional repressors. It is also associated with post-meiotically activated genes on autosomes. Post-translationally, hydroxybutyrylation of histones is induced by starvation. Lactylated in macrophages by EP300/P300 by using lactoyl-CoA directly derived from endogenous or exogenous lactate, leading to stimulates gene transcription.

The protein localises to the nucleus. It is found in the chromosome. Functionally, core component of nucleosome. Nucleosomes wrap and compact DNA into chromatin, limiting DNA accessibility to the cellular machineries which require DNA as a template. Histones thereby play a central role in transcription regulation, DNA repair, DNA replication and chromosomal stability. DNA accessibility is regulated via a complex set of post-translational modifications of histones, also called histone code, and nucleosome remodeling. This Mus musculus (Mouse) protein is Histone H2B type 1-H.